The following is a 267-amino-acid chain: Undecaprenyl-diphosphatase (267 aa).

8 helical membrane passes run 4–24 (ILIIIILGIVEGITEFFPISS), 41–61 (NIQNIIKIIQIGPIFSIILLF), 84–104 (ILILFNLVLSCIPISILGFMF), 116–136 (YISYFLILGSIFFILSEFISL), 160–180 (CFSLLPGVSRLGITISIGLIL), 185–205 (YVLFKFSMILFSSIMPAVLIL), 216–236 (ENIFFVIIGVMSSFLTSLIFG), and 246–266 (TSLIIFAIYRIFIACIILFTC).

It belongs to the UppP family.

It localises to the cell membrane. It catalyses the reaction di-trans,octa-cis-undecaprenyl diphosphate + H2O = di-trans,octa-cis-undecaprenyl phosphate + phosphate + H(+). Catalyzes the dephosphorylation of undecaprenyl diphosphate (UPP). Confers resistance to bacitracin. This is Undecaprenyl-diphosphatase from Wigglesworthia glossinidia brevipalpis.